A 292-amino-acid chain; its full sequence is Tricin synthase 2 (292 aa).

The tract at residues 21 to 46 is disordered; it reads RTTPASRVSSTAMAAANGDASHGANG. Over residues 23–32 the composition is skewed to polar residues; sequence TPASRVSSTA. Residues Ser-108, Glu-130, 132 to 133, Ser-138, Asp-156, and Ala-185 contribute to the S-adenosyl-L-methionine site; that span reads GV. Residue Asp-208 participates in a divalent metal cation binding. Asp-210 contacts S-adenosyl-L-methionine. Residues Asp-234 and Asn-235 each contribute to the a divalent metal cation site.

It belongs to the class I-like SAM-binding methyltransferase superfamily. Cation-dependent O-methyltransferase family. CCoAMT subfamily. Mg(2+) is required as a cofactor. Requires Mn(2+) as cofactor. Expressed in stems only.

The enzyme catalyses tricetin + 2 S-adenosyl-L-methionine = 3',5'-di-O-methyltricetin + 2 S-adenosyl-L-homocysteine + 2 H(+). Its function is as follows. Catalyzes the stepwise methylation of tricetin to its 3'-mono- and 3',5'-dimethyl ethers. No 3',4',5'-trimethylated ester derivatives are produced. Can use caffeoyl CoA, 5-hydroxyferulic acid, luteolin, tricetin, quercetin, myrcetin and 7,8-dihydroxyflavone as substrates, but not naringenin, apigenin or kaempferol. The 2,3-double bond and the O-dihydroxyl group of the substrate are both required for catalytic activity of the enzyme. The polypeptide is Tricin synthase 2 (ROMT-17) (Oryza sativa subsp. japonica (Rice)).